We begin with the raw amino-acid sequence, 1001 residues long: E3 ubiquitin-protein ligase BRE1B (1001 aa).

Positions methionine 1–threonine 31 are disordered. Over residues proline 18–threonine 28 the composition is skewed to basic and acidic residues. N6-acetyllysine is present on lysine 20. Serine 42 carries the phosphoserine modification. Positions glutamate 45–leucine 91 form a coiled coil. Residues glycine 116–proline 149 are disordered. Coiled coils occupy residues alanine 228–leucine 377 and leucine 437–serine 523. Residues lysine 355 and lysine 517 each carry the N6-acetyllysine modification. Residues glycine 516–arginine 646 are disordered. The segment covering alanine 520–asparagine 531 has biased composition (polar residues). Serine 528 is modified (phosphoserine). Residues lysine 578 and lysine 579 each participate in a glycyl lysine isopeptide (Lys-Gly) (interchain with G-Cter in SUMO2) cross-link. A Phosphoserine modification is found at serine 585. Composition is skewed to basic and acidic residues over residues arginine 602–glycine 619 and arginine 633–arginine 646. A coiled-coil region spans residues valine 627–leucine 946. The RING-type zinc-finger motif lies at cysteine 948 to asparagine 987.

This sequence belongs to the BRE1 family. As to quaternary structure, component of the RNF20/40 complex (also known as BRE1 complex) probably composed of 2 copies of RNF20/BRE1A and 2 copies of RNF40/BRE1B. Interacts with UBE2E1/UBCH6. Interacts with RB1 and WAC.

It is found in the nucleus. It catalyses the reaction S-ubiquitinyl-[E2 ubiquitin-conjugating enzyme]-L-cysteine + [acceptor protein]-L-lysine = [E2 ubiquitin-conjugating enzyme]-L-cysteine + N(6)-ubiquitinyl-[acceptor protein]-L-lysine.. Its pathway is protein modification; protein ubiquitination. Functionally, component of the RNF20/40 E3 ubiquitin-protein ligase complex that mediates monoubiquitination of 'Lys-120' of histone H2B (H2BK120ub1). H2BK120ub1 gives a specific tag for epigenetic transcriptional activation and is also prerequisite for histone H3 'Lys-4' and 'Lys-79' methylation (H3K4me and H3K79me, respectively). It thereby plays a central role in histone code and gene regulation. The RNF20/40 complex forms a H2B ubiquitin ligase complex in cooperation with the E2 enzyme UBE2A or UBE2B; reports about the cooperation with UBE2E1/UBCH are contradictory. Required for transcriptional activation of Hox genes. This Macaca fascicularis (Crab-eating macaque) protein is E3 ubiquitin-protein ligase BRE1B (RNF40).